We begin with the raw amino-acid sequence, 508 residues long: Dihydroniloticin synthase CYP71CD4 (508 aa).

The chain crosses the membrane as a helical span at residues 6–26 (LDFFSVTSFIIFFLFLFRLVW). Heme is bound at residue Cys-449.

This sequence belongs to the cytochrome P450 family. Requires heme as cofactor. As to expression, mainly expressed in roots and, to a lesser extent, in stems.

It localises to the membrane. The catalysed reaction is tirucalla-7,24-dien-3beta-ol + 2 reduced [NADPH--hemoprotein reductase] + 2 O2 = dihydroniloticin + 2 oxidized [NADPH--hemoprotein reductase] + 2 H2O + 2 H(+). The protein operates within secondary metabolite biosynthesis; terpenoid biosynthesis. Monooxygenase involved in the biosynthesis of quassinoids triterpene natural products such as ailanthone, chaparrinone, glaucarubinone and amarolide, allelopathic degraded triterpene lactones inhibiting the growth of other plants, and possessing antimalarial, antifeedant, insecticidal, anti-inflammatory and anticancer activities. Catalyzes the conversion of tirucalladienol to dihydroniloticin. This Ailanthus altissima (Tree-of-heaven) protein is Dihydroniloticin synthase CYP71CD4.